A 156-amino-acid chain; its full sequence is Large ribosomal subunit protein uL23 (156 aa).

Residues 1–19 (MAPKAKKEAPAPPKVEAKA) are compositionally biased toward basic and acidic residues. A disordered region spans residues 1 to 67 (MAPKAKKEAP…PKYPRKSAPR (67 aa)). A2 carries the n,N,N-trimethylalanine modification. K14 participates in a covalent cross-link: Glycyl lysine isopeptide (Lys-Gly) (interchain with G-Cter in SUMO2). Over residues 20–67 (KALKAKKAVLKGVHSHKKKKIRTSPTFRRPKTLRLRRQPKYPRKSAPR) the composition is skewed to basic residues. The beta-like import receptor binding (BIB) domain stretch occupies residues 32 to 74 (VHSHKKKKIRTSPTFRRPKTLRLRRQPKYPRKSAPRRNKLDHY). A Citrulline modification is found at R41. Position 43 is a phosphoserine (S43). T45 is modified (phosphothreonine). K70 bears the N6-acetyllysine mark.

This sequence belongs to the universal ribosomal protein uL23 family. As to quaternary structure, component of the large ribosomal subunit. Interacts with LYAR and GNL2. Interacts with MDM2; this interaction may promote MDM2-mediated p53/TP53 polyubiquitination. Directly interacts (via BIB domain) with IPO5, IPO7, KPNB1 and TNPO1; these interactions are involved in RPL23A nuclear import for the assembly of ribosomal subunits. Interacts with IPO8. N-terminus is methylated by METTL11A/NTM1. Post-translationally, citrullinated by PADI4.

The protein resides in the cytoplasm. The protein localises to the nucleus. Its function is as follows. Component of the large ribosomal subunit. The ribosome is a large ribonucleoprotein complex responsible for the synthesis of proteins in the cell. Binds a specific region on the 26S rRNA. May promote p53/TP53 degradation possibly through the stimulation of MDM2-mediated TP53 polyubiquitination. In Oryctolagus cuniculus (Rabbit), this protein is Large ribosomal subunit protein uL23 (RPL23A).